A 59-amino-acid polypeptide reads, in one-letter code: Excisionase (59 aa).

Functionally, excisionase and integrase are necessary for the excision of prophage from the host genome by site-specific recombination at the att site. The polypeptide is Excisionase (xis) (Staphylococcus phage L54a (Bacteriophage L54a)).